The primary structure comprises 414 residues: MTQANLSETLFKPRFKHTETSTLVRRFNRGSQPPMQSALDGKNVPHWYRMINRLMWIWRGVDPREILDVQARIVMSDAERTDDDLYDTVIGYRGGNWIYEWAKQAMDWQQKACQEQDAMRSGRYWLHASTLYNIAAYPHLKGDELAEQAQALANRAYEEAAQRLPGSLREMEFAVPGGSPVTAFLHMPKGDGPFPTVLMCGGLDAMQTDYYTLYERYFAPRGIAMLTLDMPSVGFSSKWKLTQDSSLLHQHVLKALPNVPWVDHTRVAAFGFRFGANVAVRLAYLEAPRLKAVACLGPVVHALLSDPQRQSTVPEMYLDVLASRLGMHDASDEALRVELNRYSLKVQGLLGRRCPTPMLSGFWKNDPFSPEEESRLITTSSSDGKLIEIPFNPVYRNFDHALQEITDWINHRLC.

It belongs to the FrsA family.

It carries out the reaction a carboxylic ester + H2O = an alcohol + a carboxylate + H(+). Catalyzes the hydrolysis of esters. The protein is Esterase FrsA of Salmonella agona (strain SL483).